Here is a 429-residue protein sequence, read N- to C-terminus: Protein S-Myc (429 aa).

Tyr36 is modified (phosphotyrosine; by Tyr-kinases). Positions 301–325 are disordered; it reads PLPYAEDARPLKKPRSQDPLGPLKC. Residues 346–398 form the bHLH domain; the sequence is ERRRNHNRMERQRRDIMRSSFLNLRDLVPELVHNEKAAKVVILKKATEYIHTL. Residues 398–419 are leucine-zipper; sequence LQTDESKLLVEREKLYERKQQL.

As to quaternary structure, efficient DNA binding requires dimerization with another bHLH protein.

The protein localises to the nucleus. Functionally, has apoptosis-inducing activity. The sequence is that of Protein S-Myc (Mycs) from Rattus norvegicus (Rat).